Here is a 73-residue protein sequence, read N- to C-terminus: UPF0346 protein lp_1865 (73 aa).

This sequence belongs to the UPF0346 family.

The protein is UPF0346 protein lp_1865 of Lactiplantibacillus plantarum (strain ATCC BAA-793 / NCIMB 8826 / WCFS1) (Lactobacillus plantarum).